Consider the following 196-residue polypeptide: Recombination protein RecR (196 aa).

The segment at 56-71 (CPVCGGLDSQQPCMIC) adopts a C4-type zinc-finger fold. The Toprim domain occupies 78–172 (PLICVVETVA…SVTRLAQGVP (95 aa)).

It belongs to the RecR family.

May play a role in DNA repair. It seems to be involved in an RecBC-independent recombinational process of DNA repair. It may act with RecF and RecO. This chain is Recombination protein RecR, found in Acidiphilium cryptum (strain JF-5).